Here is a 154-residue protein sequence, read N- to C-terminus: Phosphopantetheine adenylyltransferase (154 aa).

Substrate is bound at residue T10. ATP is bound by residues 10–11 (TF) and H18. Substrate contacts are provided by K42, L74, and R88. ATP-binding positions include 89-91 (GLR), E99, and 124-130 (NAFISSS).

Belongs to the bacterial CoaD family. In terms of assembly, homohexamer. The cofactor is Mg(2+).

It is found in the cytoplasm. The catalysed reaction is (R)-4'-phosphopantetheine + ATP + H(+) = 3'-dephospho-CoA + diphosphate. It participates in cofactor biosynthesis; coenzyme A biosynthesis; CoA from (R)-pantothenate: step 4/5. In terms of biological role, reversibly transfers an adenylyl group from ATP to 4'-phosphopantetheine, yielding dephospho-CoA (dPCoA) and pyrophosphate. This chain is Phosphopantetheine adenylyltransferase, found in Nautilia profundicola (strain ATCC BAA-1463 / DSM 18972 / AmH).